The primary structure comprises 502 residues: Hexose transporter 1 (502 aa).

The Cytoplasmic portion of the chain corresponds to M1–S26. The chain crosses the membrane as a helical span at residues L27 to L47. Residues N48–S76 lie on the Extracellular side of the membrane. A disulfide bridge connects residues C61 and C68. Residues F77–V97 traverse the membrane as a helical segment. Residues Q98 to R102 lie on the Cytoplasmic side of the membrane. The chain crosses the membrane as a helical span at residues F103 to H123. The Extracellular segment spans residues H124 to R132. The helical transmembrane segment at L133–M153 threads the bilayer. The Cytoplasmic portion of the chain corresponds to T154 to G163. Residues V164–M184 form a helical membrane-spanning segment. Q167 is an alpha-D-glucose binding site. Q167 contacts beta-D-glucose. Over G185–R205 the chain is Extracellular. The helical transmembrane segment at L206–Y226 threads the bilayer. Residues K227–N291 are Cytoplasmic-facing. The helical transmembrane segment at V292–V312 threads the bilayer. Alpha-D-glucose-binding residues include Q303, Q304, and N309. Position 303 (Q303) interacts with beta-D-glucose. N309 is a binding site for beta-D-glucose. At S313–T329 the chain is on the extracellular side. A helical membrane pass occupies residues T330–V350. A beta-D-glucose-binding site is contributed by N339. The Cytoplasmic portion of the chain corresponds to E351 to K356. A helical transmembrane segment spans residues T357–N377. Over Q378–S390 the chain is Extracellular. A helical membrane pass occupies residues I391 to I411. W410 provides a ligand contact to alpha-D-glucose. The Cytoplasmic portion of the chain corresponds to Y412–S427. A helical transmembrane segment spans residues L428–I448. Over K449–T453 the chain is Extracellular. The helical transmembrane segment at I454–I474 threads the bilayer. Residues K475–V502 lie on the Cytoplasmic side of the membrane.

Belongs to the major facilitator superfamily. Sugar transporter (TC 2.A.1.1) family. As to quaternary structure, homodimer.

Its subcellular location is the cell membrane. The catalysed reaction is D-glucose(out) = D-glucose(in). It catalyses the reaction D-fructose(out) = D-fructose(in). The enzyme catalyses D-galactose(in) = D-galactose(out). It carries out the reaction D-mannose(out) = D-mannose(in). The catalysed reaction is D-glucosamine(out) = D-glucosamine(in). It catalyses the reaction D-xylose(out) = D-xylose(in). With respect to regulation, inhibited by compound 3361 (3-O-((undec-10-en)-1-yl)-D-glucose). Sodium-independent facilitative hexose transporter. Can transport D-glucose and D-fructose. Can transport D-mannose, D-galactose, D-xylose and D-glucosamine. The polypeptide is Hexose transporter 1 (Plasmodium vivax (strain Brazil I)).